The following is a 209-amino-acid chain: N-(5'-phosphoribosyl)anthranilate isomerase (209 aa).

It belongs to the TrpF family.

The enzyme catalyses N-(5-phospho-beta-D-ribosyl)anthranilate = 1-(2-carboxyphenylamino)-1-deoxy-D-ribulose 5-phosphate. It functions in the pathway amino-acid biosynthesis; L-tryptophan biosynthesis; L-tryptophan from chorismate: step 3/5. The chain is N-(5'-phosphoribosyl)anthranilate isomerase from Pelobacter propionicus (strain DSM 2379 / NBRC 103807 / OttBd1).